We begin with the raw amino-acid sequence, 171 residues long: Protein X (171 aa).

3 helical membrane-spanning segments follow: residues 11–31, 38–58, and 73–93; these read SWYQ…IYSL, LAGI…VYLM, and AVIA…WLVI.

It localises to the virion membrane. The chain is Protein X (VPX) from Mus musculus domesticus (western European house mouse).